A 270-amino-acid polypeptide reads, in one-letter code: 3-methyl-2-oxobutanoate hydroxymethyltransferase (270 aa).

Residues D43 and D82 each coordinate Mg(2+). 3-methyl-2-oxobutanoate-binding positions include 43 to 44 (DS), D82, and K112. E114 is a binding site for Mg(2+). E179 serves as the catalytic Proton acceptor.

Belongs to the PanB family. In terms of assembly, homodecamer; pentamer of dimers. It depends on Mg(2+) as a cofactor.

It localises to the cytoplasm. It carries out the reaction 3-methyl-2-oxobutanoate + (6R)-5,10-methylene-5,6,7,8-tetrahydrofolate + H2O = 2-dehydropantoate + (6S)-5,6,7,8-tetrahydrofolate. It participates in cofactor biosynthesis; (R)-pantothenate biosynthesis; (R)-pantoate from 3-methyl-2-oxobutanoate: step 1/2. Catalyzes the reversible reaction in which hydroxymethyl group from 5,10-methylenetetrahydrofolate is transferred onto alpha-ketoisovalerate to form ketopantoate. The protein is 3-methyl-2-oxobutanoate hydroxymethyltransferase of Staphylococcus saprophyticus subsp. saprophyticus (strain ATCC 15305 / DSM 20229 / NCIMB 8711 / NCTC 7292 / S-41).